Here is a 1040-residue protein sequence, read N- to C-terminus: Multidrug resistance protein MdtB (1040 aa).

12 consecutive transmembrane segments (helical) span residues 25–45, 347–367, 369–389, 396–416, 440–460, 472–492, 537–557, 869–889, 890–910, 911–931, 968–988, and 998–1018; these read LLMA…PVAA, LMLA…NIPA, IIPG…MVFL, LTLM…IVVI, IGFT…PLLF, FAVT…TLTP, WLTL…WIVI, LIVA…ESFI, HPIT…LALM, IAGS…IGIV, ILMT…STGV, and IAMV…TPVI.

It belongs to the resistance-nodulation-cell division (RND) (TC 2.A.6) family. MdtB subfamily. Part of a tripartite efflux system composed of MdtA, MdtB and MdtC. MdtB forms a heteromultimer with MdtC.

It is found in the cell inner membrane. This Salmonella arizonae (strain ATCC BAA-731 / CDC346-86 / RSK2980) protein is Multidrug resistance protein MdtB.